Reading from the N-terminus, the 158-residue chain is Ribosomal RNA large subunit methyltransferase H (158 aa).

Residues leucine 74, glycine 105, and 124–129 each bind S-adenosyl-L-methionine; that span reads LGPLTL.

Belongs to the RNA methyltransferase RlmH family. Homodimer.

The protein localises to the cytoplasm. The catalysed reaction is pseudouridine(1915) in 23S rRNA + S-adenosyl-L-methionine = N(3)-methylpseudouridine(1915) in 23S rRNA + S-adenosyl-L-homocysteine + H(+). Functionally, specifically methylates the pseudouridine at position 1915 (m3Psi1915) in 23S rRNA. This is Ribosomal RNA large subunit methyltransferase H from Xylella fastidiosa (strain Temecula1 / ATCC 700964).